The sequence spans 1391 residues: DNA-directed RNA polymerase subunit beta' (1391 aa).

Zn(2+)-binding residues include C72, C74, C87, and C90. 3 residues coordinate Mg(2+): D462, D464, and D466. Residues C816, C890, C897, and C900 each coordinate Zn(2+).

The protein belongs to the RNA polymerase beta' chain family. As to quaternary structure, the RNAP catalytic core consists of 2 alpha, 1 beta, 1 beta' and 1 omega subunit. When a sigma factor is associated with the core the holoenzyme is formed, which can initiate transcription. It depends on Mg(2+) as a cofactor. Zn(2+) serves as cofactor.

The catalysed reaction is RNA(n) + a ribonucleoside 5'-triphosphate = RNA(n+1) + diphosphate. Its function is as follows. DNA-dependent RNA polymerase catalyzes the transcription of DNA into RNA using the four ribonucleoside triphosphates as substrates. The protein is DNA-directed RNA polymerase subunit beta' of Neisseria gonorrhoeae (strain ATCC 700825 / FA 1090).